A 266-amino-acid polypeptide reads, in one-letter code: Glucosamine-6-phosphate deaminase (266 aa).

The Proton acceptor; for enolization step role is filled by aspartate 72. Aspartate 141 (for ring-opening step) is an active-site residue. The active-site Proton acceptor; for ring-opening step is the histidine 143. Glutamate 148 (for ring-opening step) is an active-site residue.

The protein belongs to the glucosamine/galactosamine-6-phosphate isomerase family. NagB subfamily. In terms of assembly, homohexamer.

The catalysed reaction is alpha-D-glucosamine 6-phosphate + H2O = beta-D-fructose 6-phosphate + NH4(+). Its pathway is amino-sugar metabolism; N-acetylneuraminate degradation; D-fructose 6-phosphate from N-acetylneuraminate: step 5/5. With respect to regulation, allosterically activated by N-acetylglucosamine 6-phosphate (GlcNAc6P). Functionally, catalyzes the reversible isomerization-deamination of glucosamine 6-phosphate (GlcN6P) to form fructose 6-phosphate (Fru6P) and ammonium ion. The polypeptide is Glucosamine-6-phosphate deaminase (Cronobacter sakazakii (strain ATCC BAA-894) (Enterobacter sakazakii)).